The chain runs to 653 residues: Leucine-rich repeat-containing protein 4 (653 aa).

The first 38 residues, 1-38 (MKLLWQVTVHHHTWNAILLPFVYLTAQVWILCAAIAAA), serve as a signal peptide directing secretion. The region spanning 39–75 (ASAGPQNCPSVCSCSNQFSKVVCTRRGLSEVPQGIPS) is the LRRNT domain. Residues 39–527 (ASAGPQNCPS…SLDEVMKTTK (489 aa)) are Extracellular-facing. 2 cysteine pairs are disulfide-bonded: C46-C52 and C50-C61. LRR repeat units follow at residues 76–97 (NTRYLNLMENNIQMIQADTFRH), 100–121 (HLEVLQLGRNSIRQIEVGAFNG), 124–145 (SLNTLELFDNWLTVIPSGAFEY), 148–169 (KLRELWLRNNPIESIPSYAFNR), 172–194 (SLMRLDLGELKKLEYISEGAFEG), 197–218 (NLKYLNLGMCNIKDMPNLTPLV), 219–240 (GLEELEMSGNHFPEIRPGSFHG), 243–264 (SLKKLWVMNSQVSLIERNAFDG), and 267–288 (SLVELNLAHNNLSSLPHDLFTP). N-linked (GlcNAc...) asparagine glycans are attached at residues N277, N322, N363, N388, N410, N434, N440, N447, and N450. The region spanning 300 to 352 (NPWNCDCDILWLAWWLREYIPTNSTCCGRCHAPMHMRGRYLVEVDQASFQCSA) is the LRRCT domain. 2 disulfides stabilise this stretch: C304-C329 and C306-C350. In terms of domain architecture, Ig-like spans 353 to 442 (PFIMDAPRDL…SNASAYLNVS (90 aa)). The cysteines at positions 374 and 424 are disulfide-linked. Residues 528-548 (IIIGCFVAVTLLAAAMLIVFY) traverse the membrane as a helical segment. Topologically, residues 549 to 653 (KLRKRHQQRS…TKDKVQETQI (105 aa)) are cytoplasmic.

In terms of assembly, interacts with DLG4. Interacts (via LRR repeats) with NTNG2. Forms a complex with DLG4 and with NMDA receptors. Post-translationally, N-glycosylated. As to expression, specifically expressed in brain.

It localises to the membrane. The protein localises to the postsynaptic cell membrane. In terms of biological role, synaptic adhesion protein. Regulates the formation of exitatory synapses through the recruitment of pre-and-postsynaptic proteins. Organize the lamina/pathway-specific differentiation of dendrites. Plays an important role for auditory synaptic responses. Involved in the suppression of glioma. This is Leucine-rich repeat-containing protein 4 (LRRC4) from Homo sapiens (Human).